Here is a 549-residue protein sequence, read N- to C-terminus: Alpha-amylase (549 aa).

An N-terminal signal peptide occupies residues 1–34 (MLTFHRIIRKGWMFLLAFLLTALLFCPTGQPAKA). Ca(2+) is bound by residues D139, D196, A218, D220, D231, and D237. D196 contributes to the Na(+) binding site. D220, D231, D237, and L238 together coordinate Na(+). D239 contributes to the Ca(2+) binding site. D268 serves as the catalytic Nucleophile. Ca(2+) is bound at residue H272. Catalysis depends on E298, which acts as the Proton donor. Residues G337, F339, S440, D441, and D464 each contribute to the Ca(2+) site.

Belongs to the glycosyl hydrolase 13 family. Monomer. Ca(2+) is required as a cofactor. The cofactor is Na(+).

Its subcellular location is the secreted. The enzyme catalyses Endohydrolysis of (1-&gt;4)-alpha-D-glucosidic linkages in polysaccharides containing three or more (1-&gt;4)-alpha-linked D-glucose units.. This is Alpha-amylase (amyS) from Geobacillus stearothermophilus (Bacillus stearothermophilus).